The chain runs to 86 residues: YcgL domain-containing protein XC_4086 (86 aa).

Residues 1–83 form the YcgL domain; sequence MHAYVYKSQR…PKTVVLAGEC (83 aa).

This Xanthomonas campestris pv. campestris (strain 8004) protein is YcgL domain-containing protein XC_4086.